We begin with the raw amino-acid sequence, 490 residues long: Betaine aldehyde dehydrogenase (490 aa).

Residues Ile-27 and Asp-93 each coordinate K(+). Residue 150–152 (GAW) coordinates NAD(+). Residue Lys-162 is the Charge relay system of the active site. 176–179 (KPSE) serves as a coordination point for NAD(+). A K(+)-binding site is contributed by Val-180. Position 230-233 (230-233 (GTDT)) interacts with NAD(+). Leu-246 lines the K(+) pocket. The active-site Proton acceptor is Glu-252. NAD(+) contacts are provided by Gly-254, Cys-286, and Glu-387. Catalysis depends on Cys-286, which acts as the Nucleophile. Cys-286 bears the Cysteine sulfenic acid (-SOH) mark. Positions 457 and 460 each coordinate K(+). Catalysis depends on Glu-464, which acts as the Charge relay system.

This sequence belongs to the aldehyde dehydrogenase family. Dimer of dimers. Requires K(+) as cofactor.

The catalysed reaction is betaine aldehyde + NAD(+) + H2O = glycine betaine + NADH + 2 H(+). It functions in the pathway amine and polyamine biosynthesis; betaine biosynthesis via choline pathway; betaine from betaine aldehyde: step 1/1. In terms of biological role, involved in the biosynthesis of the osmoprotectant glycine betaine. Catalyzes the irreversible oxidation of betaine aldehyde to the corresponding acid. This is Betaine aldehyde dehydrogenase from Pseudomonas fluorescens (strain SBW25).